The following is a 95-amino-acid chain: Protein NCBP2AS2 homolog (95 aa).

The sequence is that of Protein NCBP2AS2 homolog from Ixodes scapularis (Black-legged tick).